A 313-amino-acid polypeptide reads, in one-letter code: Cytochrome c biogenesis protein CcsA (313 aa).

The next 8 membrane-spanning stretches (helical) occupy residues 9–29, 44–64, 71–91, 111–131, 143–163, 217–237, 244–264, and 278–298; these read ILTHISFSIVSIVITIHLITF, GIIVTFFCITGLLVTRWVSSG, LYESLIFLSWSFSLIHIIPYF, GFATSGILTEIHQSGILVPAL, MILGYAALLCGSLLSVALLVI, VISLGFTFLTIGILSGAVWAN, WNWDPKETWAFITWIVFAIYL, and AIVASIGFLIIWICYFGVNLL.

It belongs to the CcmF/CycK/Ccl1/NrfE/CcsA family. In terms of assembly, may interact with Ccs1.

Its subcellular location is the plastid. The protein localises to the chloroplast thylakoid membrane. Required during biogenesis of c-type cytochromes (cytochrome c6 and cytochrome f) at the step of heme attachment. The polypeptide is Cytochrome c biogenesis protein CcsA (Solanum lycopersicum (Tomato)).